The following is a 351-amino-acid chain: Peptide chain release factor 1 (351 aa).

At Gln-229 the chain carries N5-methylglutamine.

Belongs to the prokaryotic/mitochondrial release factor family. Methylated by PrmC. Methylation increases the termination efficiency of RF1.

It localises to the cytoplasm. In terms of biological role, peptide chain release factor 1 directs the termination of translation in response to the peptide chain termination codons UAG and UAA. The sequence is that of Peptide chain release factor 1 from Cereibacter sphaeroides (strain ATCC 17029 / ATH 2.4.9) (Rhodobacter sphaeroides).